We begin with the raw amino-acid sequence, 275 residues long: tRNA pseudouridine synthase A (275 aa).

D56 acts as the Nucleophile in catalysis. Y110 contacts substrate.

This sequence belongs to the tRNA pseudouridine synthase TruA family.

The enzyme catalyses uridine(38/39/40) in tRNA = pseudouridine(38/39/40) in tRNA. Formation of pseudouridine at positions 38, 39 and 40 in the anticodon stem and loop of transfer RNAs. The sequence is that of tRNA pseudouridine synthase A from Haloarcula marismortui (strain ATCC 43049 / DSM 3752 / JCM 8966 / VKM B-1809) (Halobacterium marismortui).